A 242-amino-acid polypeptide reads, in one-letter code: 2-C-methyl-D-erythritol 4-phosphate cytidylyltransferase (242 aa).

This sequence belongs to the IspD/TarI cytidylyltransferase family. IspD subfamily.

The catalysed reaction is 2-C-methyl-D-erythritol 4-phosphate + CTP + H(+) = 4-CDP-2-C-methyl-D-erythritol + diphosphate. It participates in isoprenoid biosynthesis; isopentenyl diphosphate biosynthesis via DXP pathway; isopentenyl diphosphate from 1-deoxy-D-xylulose 5-phosphate: step 2/6. In terms of biological role, catalyzes the formation of 4-diphosphocytidyl-2-C-methyl-D-erythritol from CTP and 2-C-methyl-D-erythritol 4-phosphate (MEP). The polypeptide is 2-C-methyl-D-erythritol 4-phosphate cytidylyltransferase (Vesicomyosocius okutanii subsp. Calyptogena okutanii (strain HA)).